Here is a 653-residue protein sequence, read N- to C-terminus: ATP-dependent rRNA helicase SPB4 (653 aa).

The Q motif signature appears at tryptophan 17 to alanine 45. The Helicase ATP-binding domain occupies isoleucine 48–isoleucine 257. Alanine 61–threonine 68 lines the ATP pocket. Residues aspartate 205 to aspartate 208 carry the DEAD box motif. The Helicase C-terminal domain occupies alanine 291–leucine 444. A disordered region spans residues lysine 534–aspartate 653. The span at proline 558–tryptophan 569 shows a compositional bias: polar residues. Positions lysine 571–lysine 627 form a coiled coil. Basic and acidic residues-rich tracts occupy residues threonine 572 to lysine 581 and lysine 590 to alanine 626. Over residues lysine 627–serine 636 the composition is skewed to polar residues. The segment covering alanine 641–aspartate 653 has biased composition (acidic residues).

The protein belongs to the DEAD box helicase family. DDX55/SPB4 subfamily. As to quaternary structure, component of pre-60S ribosomal complexes.

The protein localises to the nucleus. The protein resides in the nucleolus. The enzyme catalyses ATP + H2O = ADP + phosphate + H(+). Its function is as follows. ATP-binding RNA helicase involved in the biogenesis of 60S ribosomal subunits. Binds 90S pre-ribosomal particles and dissociates from pre-60S ribosomal particles after processing of 27SB pre-rRNA. Required for the normal formation of 18S rRNA through the processing of pre-rRNAs at sites A0, A1 and A2, and the normal formation of 25S and 5.8S rRNAs through the processing of pre-rRNAs at sites C1 and C2. This is ATP-dependent rRNA helicase SPB4 from Coccidioides immitis (strain RS) (Valley fever fungus).